The chain runs to 205 residues: Holliday junction branch migration complex subunit RuvA (205 aa).

Residues 1–64 are domain I; sequence MIGKLKGLID…EDQIKLFGFR (64 aa). Residues 65-143 form a domain II region; that stretch reads SDLEREWFRL…AFASVDPAVV (79 aa). The interval 144–153 is flexible linker; the sequence is ALSGALDERS. Positions 153-205 are domain III; the sequence is SAPRPVTDAISALVNLGYGQPQAAAAIASASRSAGEGAETAQLIKLGLKELSK.

It belongs to the RuvA family. In terms of assembly, homotetramer. Forms an RuvA(8)-RuvB(12)-Holliday junction (HJ) complex. HJ DNA is sandwiched between 2 RuvA tetramers; dsDNA enters through RuvA and exits via RuvB. An RuvB hexamer assembles on each DNA strand where it exits the tetramer. Each RuvB hexamer is contacted by two RuvA subunits (via domain III) on 2 adjacent RuvB subunits; this complex drives branch migration. In the full resolvosome a probable DNA-RuvA(4)-RuvB(12)-RuvC(2) complex forms which resolves the HJ.

The protein localises to the cytoplasm. Its function is as follows. The RuvA-RuvB-RuvC complex processes Holliday junction (HJ) DNA during genetic recombination and DNA repair, while the RuvA-RuvB complex plays an important role in the rescue of blocked DNA replication forks via replication fork reversal (RFR). RuvA specifically binds to HJ cruciform DNA, conferring on it an open structure. The RuvB hexamer acts as an ATP-dependent pump, pulling dsDNA into and through the RuvAB complex. HJ branch migration allows RuvC to scan DNA until it finds its consensus sequence, where it cleaves and resolves the cruciform DNA. This is Holliday junction branch migration complex subunit RuvA from Rhodopseudomonas palustris (strain BisB18).